A 131-amino-acid polypeptide reads, in one-letter code: Phosphoribosyl-AMP cyclohydrolase (131 aa).

Residue D74 coordinates Mg(2+). C75 serves as a coordination point for Zn(2+). 2 residues coordinate Mg(2+): D76 and D78. Zn(2+) contacts are provided by C91 and C98.

This sequence belongs to the PRA-CH family. Homodimer. Mg(2+) serves as cofactor. Requires Zn(2+) as cofactor.

The protein localises to the cytoplasm. It carries out the reaction 1-(5-phospho-beta-D-ribosyl)-5'-AMP + H2O = 1-(5-phospho-beta-D-ribosyl)-5-[(5-phospho-beta-D-ribosylamino)methylideneamino]imidazole-4-carboxamide. Its pathway is amino-acid biosynthesis; L-histidine biosynthesis; L-histidine from 5-phospho-alpha-D-ribose 1-diphosphate: step 3/9. Its function is as follows. Catalyzes the hydrolysis of the adenine ring of phosphoribosyl-AMP. The polypeptide is Phosphoribosyl-AMP cyclohydrolase (Bradyrhizobium sp. (strain BTAi1 / ATCC BAA-1182)).